A 471-amino-acid polypeptide reads, in one-letter code: Ankyrin repeat and death domain-containing protein 1A (471 aa).

ANK repeat units follow at residues 19-48 (VGRV…AVDE), 52-81 (FGMN…KIHC), 85-114 (DGLT…DVAL), 120-149 (LGRT…DHSV), 153-182 (EGNT…DLEE), 186-215 (EGLT…TVNA), 219-248 (KNLS…CTNV), 251-280 (HGAS…DLNA), 284-313 (RQQT…DLNL), and 317-346 (QGKT…FYKW). The 89-residue stretch at 379–467 (SVLWRLASRH…DLAELAVASV (89 aa)) folds into the Death domain.

In Macaca fascicularis (Crab-eating macaque), this protein is Ankyrin repeat and death domain-containing protein 1A (ANKDD1A).